The following is a 161-amino-acid chain: Transcriptional repressor NrdR (161 aa).

The segment at 3–34 (CPFCGKYDTKVTDSRLVAEGDQVRRRRQCNDC) is a zinc-finger region. The ATP-cone domain occupies 49-139 (PRVIKGDGSR…VYRRFQDLDE (91 aa)).

The protein belongs to the NrdR family. Zn(2+) is required as a cofactor.

Negatively regulates transcription of bacterial ribonucleotide reductase nrd genes and operons by binding to NrdR-boxes. This is Transcriptional repressor NrdR from Chromohalobacter salexigens (strain ATCC BAA-138 / DSM 3043 / CIP 106854 / NCIMB 13768 / 1H11).